The sequence spans 155 residues: SsrA-binding protein (155 aa).

It belongs to the SmpB family.

Its subcellular location is the cytoplasm. In terms of biological role, required for rescue of stalled ribosomes mediated by trans-translation. Binds to transfer-messenger RNA (tmRNA), required for stable association of tmRNA with ribosomes. tmRNA and SmpB together mimic tRNA shape, replacing the anticodon stem-loop with SmpB. tmRNA is encoded by the ssrA gene; the 2 termini fold to resemble tRNA(Ala) and it encodes a 'tag peptide', a short internal open reading frame. During trans-translation Ala-aminoacylated tmRNA acts like a tRNA, entering the A-site of stalled ribosomes, displacing the stalled mRNA. The ribosome then switches to translate the ORF on the tmRNA; the nascent peptide is terminated with the 'tag peptide' encoded by the tmRNA and targeted for degradation. The ribosome is freed to recommence translation, which seems to be the essential function of trans-translation. This Streptococcus suis (strain 98HAH33) protein is SsrA-binding protein.